Reading from the N-terminus, the 227-residue chain is MNSIEFPLLDRTTQNSVISTTSNDLSNWSRLSSLWPLLYGTSCCFIEFASLIGSRFDFDRYGLVPRSSPRQADLILTAGTVTMKMAPSLVRLYEQMPEPKYVIAMGACTITGGMFSTDSYSTVRGVDKLIPVDVYLPGCPPKPEAVIDAITKLRKKVSREIYEDRIGSQQENRYFTTNHKFHVGRSTHTGNYDQGLLYKSPSTSEIPPETETFFKYKSSVSSHELVN.

The [4Fe-4S] cluster site is built by Cys-43, Cys-44, Cys-108, and Cys-139.

The protein belongs to the complex I 20 kDa subunit family. In terms of assembly, NDH is composed of at least 16 different subunits, 5 of which are encoded in the nucleus. Requires [4Fe-4S] cluster as cofactor.

The protein resides in the plastid. It localises to the chloroplast thylakoid membrane. The catalysed reaction is a plastoquinone + NADH + (n+1) H(+)(in) = a plastoquinol + NAD(+) + n H(+)(out). The enzyme catalyses a plastoquinone + NADPH + (n+1) H(+)(in) = a plastoquinol + NADP(+) + n H(+)(out). Its function is as follows. NDH shuttles electrons from NAD(P)H:plastoquinone, via FMN and iron-sulfur (Fe-S) centers, to quinones in the photosynthetic chain and possibly in a chloroplast respiratory chain. The immediate electron acceptor for the enzyme in this species is believed to be plastoquinone. Couples the redox reaction to proton translocation, and thus conserves the redox energy in a proton gradient. This Drimys granadensis protein is NAD(P)H-quinone oxidoreductase subunit K, chloroplastic.